A 348-amino-acid chain; its full sequence is MPAPADREKALDAALAAIDKNFGKGSVMRLGDEVRPPIEVIPTGSISLDVALGIGGLPRGRVVEIYGPESSGKTTVALHAVASAQKAGGIAAFIDAEHALDPDYAAKLGVDTDALLVSQPDTGEQALEIADMLIRSGALDIIVIDSVAALVPKAEIEGEMGDSHVGLQARLMSQALRKITGALNHSGTTAIFINQLREKIGVMFGSPETTTGGKALKFYASVRLDVRRIETLKDGTNPVGNRTRVKVVKNKVSPPFKQAEFDIIYGQGISREGGLIDLGVEHGFVRKSGAWYTYEGDQLGQGKENARAFLRDNPDLGDEIEKRIKEKLGIGARLDAPAEVDVEEKVDF.

67-74 (GPESSGKT) contributes to the ATP binding site.

It belongs to the RecA family.

It localises to the cytoplasm. Its function is as follows. Can catalyze the hydrolysis of ATP in the presence of single-stranded DNA, the ATP-dependent uptake of single-stranded DNA by duplex DNA, and the ATP-dependent hybridization of homologous single-stranded DNAs. It interacts with LexA causing its activation and leading to its autocatalytic cleavage. The protein is Protein RecA of Kineococcus radiotolerans (strain ATCC BAA-149 / DSM 14245 / SRS30216).